Reading from the N-terminus, the 861-residue chain is Cone cGMP-specific 3',5'-cyclic phosphodiesterase subunit alpha' (861 aa).

GAF domains follow at residues 75-224 (SAEQ…AVAL) and 256-433 (DVER…GWSL). 3',5'-cyclic GMP contacts are provided by residues Ser97, Asn116, 169–172 (DKQT), and Thr176. The PDEase domain occupies 486-819 (EERQLLAILK…VEWKSLAEEY (334 aa)). His562 functions as the Proton donor in the catalytic mechanism. Residues His566, His602, Asp603, and Asp723 each contribute to the a divalent metal cation site. Residues 826–839 (TEEEAGKQEEEASD) show a composition bias toward basic and acidic residues. The segment at 826–861 (TEEEAGKQEEEASDGKAATDLGGSAEDKKSKTCLML) is disordered. A Cysteine methyl ester modification is found at Cys858. Cys858 carries the S-geranylgeranyl cysteine lipid modification. The propeptide at 859-861 (LML) is removed in mature form.

The protein belongs to the cyclic nucleotide phosphodiesterase family. In terms of assembly, composed of two alpha' subunits that are associated with 3 smaller proteins of 11, 13, and 15 kDa. A divalent metal cation serves as cofactor.

The protein resides in the cell membrane. The enzyme catalyses 3',5'-cyclic GMP + H2O = GMP + H(+). In terms of biological role, as cone-specific cGMP phosphodiesterase, it plays an essential role in light detection and cone phototransduction by rapidly decreasing intracellular levels of cGMP. In Mus musculus (Mouse), this protein is Cone cGMP-specific 3',5'-cyclic phosphodiesterase subunit alpha' (Pde6c).